Reading from the N-terminus, the 29-residue chain is Cyclotide cter-L (29 aa).

Residues 1 to 29 (HEPCGESCVFIPCITTVVGCSCKNKVCYD) constitute a cross-link (cyclopeptide (His-Asp)). 3 cysteine pairs are disulfide-bonded: Cys-4–Cys-20, Cys-8–Cys-22, and Cys-13–Cys-27.

In terms of processing, contains 3 disulfide bonds. This is a cyclic peptide.

Functionally, probably participates in a plant defense mechanism. The sequence is that of Cyclotide cter-L from Clitoria ternatea (Butterfly pea).